The primary structure comprises 131 residues: Profilin (131 aa).

This sequence belongs to the profilin family. As to quaternary structure, occurs in many kinds of cells as a complex with monomeric actin in a 1:1 ratio.

The protein resides in the cytoplasm. Its subcellular location is the cytoskeleton. Its function is as follows. Binds to actin and affects the structure of the cytoskeleton. At high concentrations, profilin prevents the polymerization of actin, whereas it enhances it at low concentrations. By binding to PIP2, it inhibits the formation of IP3 and DG. The polypeptide is Profilin (Pyrus communis (Pear)).